We begin with the raw amino-acid sequence, 118 residues long: Non-specific lipid-transfer protein 3 (118 aa).

An N-terminal signal peptide occupies residues 1–25 (MARSMNLACVALVMCMVVIAPMAEA). 4 disulfide bridges follow: C29–C76, C39–C53, C54–C99, and C74–C113.

The protein belongs to the plant LTP family.

Its function is as follows. Plant non-specific lipid-transfer proteins transfer phospholipids as well as galactolipids across membranes. May play a role in wax or cutin deposition in the cell walls of expanding epidermal cells and certain secretory tissues. This is Non-specific lipid-transfer protein 3 from Lens culinaris (Lentil).